An 89-amino-acid chain; its full sequence is MSASSRSQVLSLYKIMLRESQRFSSYNYRTYAIRRIRDAFREKKNVDDFLEIETLLHRAKENLNVIQRQVTIGQMYATHKLVIESAEHR.

This sequence belongs to the complex I LYR family.

It is found in the mitochondrion. Its subcellular location is the nucleus. Its pathway is cofactor biosynthesis; iron-sulfur cluster biosynthesis. Functionally, required for nuclear and mitochondrial iron-sulfur protein biosynthesis. This chain is LYR motif-containing protein 4 (lyrm4), found in Xenopus laevis (African clawed frog).